Reading from the N-terminus, the 267-residue chain is GTP cyclohydrolase FolE2 (267 aa).

The protein belongs to the GTP cyclohydrolase IV family.

The enzyme catalyses GTP + H2O = 7,8-dihydroneopterin 3'-triphosphate + formate + H(+). Its pathway is cofactor biosynthesis; 7,8-dihydroneopterin triphosphate biosynthesis; 7,8-dihydroneopterin triphosphate from GTP: step 1/1. Converts GTP to 7,8-dihydroneopterin triphosphate. This Nitrosococcus oceani (strain ATCC 19707 / BCRC 17464 / JCM 30415 / NCIMB 11848 / C-107) protein is GTP cyclohydrolase FolE2.